Here is an 87-residue protein sequence, read N- to C-terminus: Large ribosomal subunit protein bL27 (87 aa).

This sequence belongs to the bacterial ribosomal protein bL27 family.

The polypeptide is Large ribosomal subunit protein bL27 (Pseudarthrobacter chlorophenolicus (strain ATCC 700700 / DSM 12829 / CIP 107037 / JCM 12360 / KCTC 9906 / NCIMB 13794 / A6) (Arthrobacter chlorophenolicus)).